Here is a 472-residue protein sequence, read N- to C-terminus: MKQSAIALALLSCLITPVSQAQTSQNINILENRAAQGDITMPGGARRLSGDQTEALRASLNDKPAKNIILLIGDGMGDSEITAARNYAEGAGGYFKGIDALPLTGQYTHYALDKKTGKPDYVTDSAASATAWTTGVKTYNGALGVDIHENPHTTILEMAKAAGLATGNVSTAELQDATPAALVSHVTSRKCYGPSVTSEKCPGNALEKGGKGSITEQLLNARADVTLGGGAKTFAETATAGEWQGKTLREQALARGYQIVSDAASLAAVTQAGQDKPLLGLFAEGNMPVRWHGPKASYHGNLDKPAVTCTPNPQRNETVPTLAQMTDKAIELLSKNERGFFLQVEGASIDKQDHAANPCGQIGETVDLDEAVQRALEFAKKDGNTLVIVTADHAHSSQIVAPDTKAPGLTQALNTKDGAVMAISYGNSEEDSQEHTGSQLRIAAYGPNAANVVGLTDQTDLFYTMKAALGLQ.

The signal sequence occupies residues 1-21 (MKQSAIALALLSCLITPVSQA). Residue Asp-74 participates in Mg(2+) binding. Asp-74 serves as a coordination point for Zn(2+). Ser-125 acts as the Phosphoserine intermediate in catalysis. Asp-176 and Thr-178 together coordinate Mg(2+). Cystine bridges form between Cys-191–Cys-201 and Cys-309–Cys-359. Glu-345 provides a ligand contact to Mg(2+). The Zn(2+) site is built by Asp-350, His-354, Asp-392, His-393, and His-435.

It belongs to the alkaline phosphatase family. Homodimer. Mg(2+) serves as cofactor. Requires Zn(2+) as cofactor.

Its subcellular location is the periplasm. The catalysed reaction is a phosphate monoester + H2O = an alcohol + phosphate. The polypeptide is Alkaline phosphatase (phoA) (Escherichia fergusonii (strain ATCC 35469 / DSM 13698 / CCUG 18766 / IAM 14443 / JCM 21226 / LMG 7866 / NBRC 102419 / NCTC 12128 / CDC 0568-73)).